The primary structure comprises 146 residues: UPF0178 protein BCG9842_B2187 (146 aa).

Belongs to the UPF0178 family.

This Bacillus cereus (strain G9842) protein is UPF0178 protein BCG9842_B2187.